The following is a 614-amino-acid chain: Probable glutamate--tRNA ligase, cytoplasmic (614 aa).

130–132 contributes to the L-glutamate binding site; it reads RFA. The 'HIGH' region signature appears at 135–144; that stretch reads PSGCLHIGHL. His-140 is an ATP binding site. L-glutamate contacts are provided by residues Asp-166, 303–307, and Arg-321; that span reads YDFVC. Residues Glu-324 and 359–363 each bind ATP; that span reads VLSKR. A 'KMSKS' region motif is present at residues 359 to 363; that stretch reads VLSKR.

It belongs to the class-I aminoacyl-tRNA synthetase family. Glutamate--tRNA ligase type 2 subfamily.

The protein resides in the cytoplasm. The enzyme catalyses tRNA(Glu) + L-glutamate + ATP = L-glutamyl-tRNA(Glu) + AMP + diphosphate. The polypeptide is Probable glutamate--tRNA ligase, cytoplasmic (Vairimorpha ceranae (strain BRL01) (Microsporidian parasite)).